A 258-amino-acid chain; its full sequence is Imidazole glycerol phosphate synthase subunit HisF (258 aa).

Active-site residues include Asp11 and Asp130.

The protein belongs to the HisA/HisF family. As to quaternary structure, heterodimer of HisH and HisF.

The protein resides in the cytoplasm. It catalyses the reaction 5-[(5-phospho-1-deoxy-D-ribulos-1-ylimino)methylamino]-1-(5-phospho-beta-D-ribosyl)imidazole-4-carboxamide + L-glutamine = D-erythro-1-(imidazol-4-yl)glycerol 3-phosphate + 5-amino-1-(5-phospho-beta-D-ribosyl)imidazole-4-carboxamide + L-glutamate + H(+). It participates in amino-acid biosynthesis; L-histidine biosynthesis; L-histidine from 5-phospho-alpha-D-ribose 1-diphosphate: step 5/9. Its function is as follows. IGPS catalyzes the conversion of PRFAR and glutamine to IGP, AICAR and glutamate. The HisF subunit catalyzes the cyclization activity that produces IGP and AICAR from PRFAR using the ammonia provided by the HisH subunit. The chain is Imidazole glycerol phosphate synthase subunit HisF from Bradyrhizobium sp. (strain BTAi1 / ATCC BAA-1182).